The sequence spans 376 residues: MGDFVFCYGSRNKKHLSKYIKQTKHNYRLYLSDDDYIKVKIETRINQKYIIVDFNDSINFIKFIVKEKIYCQMSYKHSCNLFFYQNNYLKYIIHNKHLDAIKIFYKKFIPMVNSVLKFDLLFNYQYSQIDPEILKYIFKHGDLKDTVPLIIGCVYQYPNITIEFMSDIIFIYKHKLVKILSGNKFLDVDFDKIMISIFIFLVPSLEKDDIEFFNFIVDEFRYLLNDIDETKLNDEQLSLLKKFRSEYEILDINDFIYCYTVCDFSTQNEKTYYCPNIFRQMVLSLDNINYLKNNVVPDILEYDIVEYMGVICDFIGTTNPKLINKMLTKARSTEMAQLLIDYGADYEKLYESNKFRECHSSVKKLVRKIIRETSDS.

The protein belongs to the mimivirus L17x/L18x family.

This is an uncharacterized protein from Acanthamoeba polyphaga (Amoeba).